Here is a 340-residue protein sequence, read N- to C-terminus: MNVFEPRLSSWLENAGDDDDVVLSSRIRLARNLKDEQFPIYEQKEEIVDNIAEVFDDNFILIKMNQISLLQKALLVEKHLISPYMMNKSEYGAVLLNEEENVSIMLNEEDHLRIQCMTPGLRLFDALEAALQIDGYVEEKLSYAFDKEFGYLTSCVTNIGTGMRASVMVHLPGLVTTKRIKSVIEAIRSLGFVVRGIYGEGSMPASNIFQVSNQVTLGKTEAEIVEDLTQVMEQIIMQERVARTTLKQKFHIALEDRVFRSYGLLMNCRIISMKEAADAISDIRFGVELGFFEHISRQKMNELVLFSQPAFLRREAGRDMDELEEKVIRAKVIREILGDK.

One can recognise a Phosphagen kinase C-terminal domain in the interval 21–242 (VVLSSRIRLA…EQIIMQERVA (222 aa)). Residues 24 to 28 (SSRIR), H79, R113, 164 to 168 (RASVM), and 195 to 200 (RGIYGE) each bind ATP.

Belongs to the ATP:guanido phosphotransferase family.

It catalyses the reaction L-arginyl-[protein] + ATP = N(omega)-phospho-L-arginyl-[protein] + ADP + H(+). In terms of biological role, catalyzes the specific phosphorylation of arginine residues in proteins. The sequence is that of Protein-arginine kinase from Listeria monocytogenes serovar 1/2a (strain ATCC BAA-679 / EGD-e).